The primary structure comprises 390 residues: Large ribosomal subunit protein mL44 (390 aa).

Residues 1–59 constitute a mitochondrion transit peptide; sequence MGIVLKRAIAAGMKPFPNSTWHWSRTIRPFSQHLSSTCFLQQSSRFTSKRYLHLSTLTQ. Residues 139 to 205 enclose the RNase III domain; sequence AFVNTVPTNK…LAHIAKYWGI (67 aa). Residues 302 to 372 enclose the DRBM domain; it reads QPTRELAMLC…ATDALMKWYC (71 aa).

It belongs to the ribonuclease III family. Mitochondrion-specific ribosomal protein mL44 subfamily. In terms of assembly, component of the mitochondrial large ribosomal subunit (mt-LSU). Mature yeast 74S mitochondrial ribosomes consist of a small (37S) and a large (54S) subunit. The 37S small subunit contains a 15S ribosomal RNA (15S mt-rRNA) and 34 different proteins. The 54S large subunit contains a 21S rRNA (21S mt-rRNA) and 46 different proteins. mL44 forms a heterodimer with mL57 and stabilizes rRNA expansion segments 1/2 at a membrane-facing protuberance close to the point of attachment of the ribosome to the translocon in the membrane.

It is found in the mitochondrion. In terms of biological role, component of the mitochondrial ribosome (mitoribosome), a dedicated translation machinery responsible for the synthesis of mitochondrial genome-encoded proteins, including at least some of the essential transmembrane subunits of the mitochondrial respiratory chain. The mitoribosomes are attached to the mitochondrial inner membrane and translation products are cotranslationally integrated into the membrane. The chain is Large ribosomal subunit protein mL44 (MRPL3) from Saccharomyces cerevisiae (strain ATCC 204508 / S288c) (Baker's yeast).